Consider the following 369-residue polypeptide: tRNA/tmRNA (uracil-C(5))-methyltransferase (369 aa).

S-adenosyl-L-methionine contacts are provided by Gln190, Tyr218, Asn223, Glu239, and Asp301. Cys326 functions as the Nucleophile in the catalytic mechanism. Catalysis depends on Glu360, which acts as the Proton acceptor.

It belongs to the class I-like SAM-binding methyltransferase superfamily. RNA M5U methyltransferase family. TrmA subfamily.

The catalysed reaction is uridine(54) in tRNA + S-adenosyl-L-methionine = 5-methyluridine(54) in tRNA + S-adenosyl-L-homocysteine + H(+). The enzyme catalyses uridine(341) in tmRNA + S-adenosyl-L-methionine = 5-methyluridine(341) in tmRNA + S-adenosyl-L-homocysteine + H(+). Its function is as follows. Dual-specificity methyltransferase that catalyzes the formation of 5-methyluridine at position 54 (m5U54) in all tRNAs, and that of position 341 (m5U341) in tmRNA (transfer-mRNA). The sequence is that of tRNA/tmRNA (uracil-C(5))-methyltransferase from Vibrio parahaemolyticus serotype O3:K6 (strain RIMD 2210633).